The sequence spans 66 residues: Large ribosomal subunit protein bL35 (66 aa).

The disordered stretch occupies residues 1–23 (MPKMKTHRASAKRFKRTANGGLK).

This sequence belongs to the bacterial ribosomal protein bL35 family.

The polypeptide is Large ribosomal subunit protein bL35 (Lactobacillus helveticus (strain DPC 4571)).